The following is a 1626-amino-acid chain: MSESGNTTSMPGCGRMCALRSTWSKRAFLVACKDGALTSDGRCPQYGCGALVSITKGVQQPKKTASAKVVKCLCWVQPARWCEKHSKGPASPNGSVTTKRSNSARAAPAPLPYKKQTCDVVVTVGPLELVYPALVSEELPTPVAATPTKVEEVPIPELPLWLAPAWMVEQPYAATPEVLCLTQREEFALLKKRLTRKGKLLQRRATHARFEARAALARVRAATQRKVEEVTALVIKGRRILAAHQLLRELEEVAPLSQAQEQLVASSCAAAAARQEECASFLRRAKAWRKSISATPPVAFATAVASKVVSATMPWAHLGLSLGGLLAVPTLDGTLGAKQWNAKTIATWVLKPVVSCVQSVHAKVRDWLHSQPEVGVTNTKVPLVLPEVCLGVLSPPSLSEEIVDNPQETSQSGIWHPEMGVRNIYVFHDDSWETSPEEDENYTYTFSRQCGIPYLLVEGRGAEERKNTILGWDFSLHNDGEFEFLPSPEEGYTKELVTPVALEEEDKYSTASSCGFFSLDDVSSAITIQCPGLLSADADVHFFDGPGYRCSSRPRDFRPPVVRGCDYESRVKASIQRKIENPLQERFITVLREKRKKNKKKEFHSFSACFAFKRKQIQWPPTPNEMVNEWEEYCIAQAWLPFEVVVTDEIEDVTPLYPGGRDYNCNSQLLFPLAPLSTVYCDDSCFHPNDGWTTDGNGKHFRLSPQFVLPDVPIPIVHRVTRQLPQFLYDLGIGDLTCNSGYQAENLQEEIQERMEDRSEEKPVPSLDTLISKLSKRSTKVKGAGENRYADRHSLTEKAIFHQPGALSRMRSGKEKTIVAANHNSDQISVRMAECGKPVFTPLPRMSDEMLRKFLEKGLGSTSTVALDIGIQSHIPQGMPTVAFVNVMDTRIEDPLYSSLCGSYIDLGRDRAKTLCLPLVNFPMSKLAEDVDDVLNGLMLCTHFQDSTKFGVGKPAFQYGTLEFQEFKPSAYSDFSRVRDNWDAIAKQQNTPNDRILAGFSVLGAVSQAYNQALPVFKSVELVAPPKRKPVVATFQNPTTLGRSNTTRSFRMPTMDLPRSTGRDAPIPIVHRRNNNDVHGFDEATPARFSTCDSGLVADTTLAFAKMYQCKKDAKAGHVLATIDIQECVFEDNRRVALDWLAHGLASFKYDLQLTVDSNPFVGVTLGITVDAFDRLLPQISDEVIAVPLAFQLPTYLFPISKKGTFTQTIDFAAIAGYNFFPHVAAFGRPKIIVYIVSDNDLPASDTWMCLVELHMTRLESSTLACSPTLVLPQAFGGDLPLDLWRGPYTFPLGGGTKRLSTSLDIGTSTTTVSGWRTVSFPAAYALFLQGHGGSLVGEVVHTGSAAVSCALHLCISFGGAPPTLEEALVFPGFRLPSGEGKFHIKVQTPYGRLSTLTPDCALYVYLAGGPIAVAPMSVPYQFCIHLERLVDDGAPPRTIGLIREFNWATINNFKSDDITFAIPARLSDLVLTCGDVTMSTNPLALLIGSCGFFRGNLTVVLEWATFLKAGDKEGTVQLTTCRGMINNVKGVRNAIQKKVVNLSLVGSVSRYLNVGDFTGFAQSGGQVGYDEIFLEFSTNKAKQIRYLNINVELDENFELYGRTIIPLKNTAPAFASTSASAPNES.

Disordered stretches follow at residues K84 to A107 and G1042 to P1066. The span at P92–A104 shows a compositional bias: polar residues.

The protein belongs to the nepoviruses RNA2 polyprotein family. Post-translationally, specific enzymatic cleavages in vivo by the P1 encoded 3C-like protease yield mature proteins.

It is found in the host cell junction. The protein resides in the host plasmodesma. It localises to the virion. In terms of biological role, implicated in RNA2 replication. Could also be required for nematode transmission of the virus. Functionally, transports viral genome to neighboring plant cells directly through plasmosdesmata, without any budding. The movement protein allows efficient cell to cell propagation, by bypassing the host cell wall barrier. Acts by forming a tubular structure at the host plasmodesmata, enlarging it enough to allow free passage of virion capsids. The protein is RNA2 polyprotein of Blackcurrant reversion association virus (BRAV).